The sequence spans 196 residues: Probable malonic semialdehyde reductase RutE (196 aa).

The protein belongs to the nitroreductase family. HadB/RutE subfamily. Requires FMN as cofactor.

It carries out the reaction 3-hydroxypropanoate + NADP(+) = 3-oxopropanoate + NADPH + H(+). May reduce toxic product malonic semialdehyde to 3-hydroxypropionic acid, which is excreted. The sequence is that of Probable malonic semialdehyde reductase RutE from Escherichia coli O6:H1 (strain CFT073 / ATCC 700928 / UPEC).